The primary structure comprises 170 residues: Calcineurin subunit B type 1 (170 aa).

4 consecutive EF-hand domains span residues 18–46, 50–85, 87–122, and 128–163; these read DEIR…FMSL, QQNP…FSVR, DKLS…MVGN, and QLQQ…TDIH. Ca(2+) contacts are provided by Asp-31, Asp-33, Ser-35, Glu-42, Asp-63, Asp-65, Asn-67, Glu-69, Glu-74, Asp-100, Asp-102, Asp-104, Tyr-106, Glu-111, Asp-141, Asp-143, Asp-145, Lys-147, and Glu-152.

This sequence belongs to the calcineurin regulatory subunit family. Composed of two components (A and B), the A component is the catalytic subunit and the B component confers calcium sensitivity.

In terms of biological role, calcineurin is a calcium-binding and calmodulin-binding protein found in all cells from yeast to mammals, and a calcium-dependent, calmodulin-stimulated protein phosphatase. In Drosophila melanogaster (Fruit fly), this protein is Calcineurin subunit B type 1 (CanB).